The following is a 188-amino-acid chain: ATP synthase subunit b (188 aa).

Residues 21–41 (ILPHLGELIVGIIFAIIIYAV) form a helical membrane-spanning segment.

It belongs to the ATPase B chain family. In terms of assembly, F-type ATPases have 2 components, F(1) - the catalytic core - and F(0) - the membrane proton channel. F(1) has five subunits: alpha(3), beta(3), gamma(1), delta(1), epsilon(1). F(0) has three main subunits: a(1), b(2) and c(10-14). The alpha and beta chains form an alternating ring which encloses part of the gamma chain. F(1) is attached to F(0) by a central stalk formed by the gamma and epsilon chains, while a peripheral stalk is formed by the delta and b chains.

Its subcellular location is the cell membrane. In terms of biological role, f(1)F(0) ATP synthase produces ATP from ADP in the presence of a proton or sodium gradient. F-type ATPases consist of two structural domains, F(1) containing the extramembraneous catalytic core and F(0) containing the membrane proton channel, linked together by a central stalk and a peripheral stalk. During catalysis, ATP synthesis in the catalytic domain of F(1) is coupled via a rotary mechanism of the central stalk subunits to proton translocation. Functionally, component of the F(0) channel, it forms part of the peripheral stalk, linking F(1) to F(0). This Kineococcus radiotolerans (strain ATCC BAA-149 / DSM 14245 / SRS30216) protein is ATP synthase subunit b.